A 580-amino-acid chain; its full sequence is PTS system fructose-specific EIIB'BC component (580 aa).

PTS EIIB type-2 domains follow at residues 3 to 100 (MKIA…QAAE) and 124 to 221 (KKIV…NAFA). Residues Cys-11 and Cys-132 each act as phosphocysteine intermediate; for EIIB activity in the active site. A phosphocysteine; by EIIA mark is found at Cys-11 and Cys-132. Residues 244–579 (VYKHLMTGVS…KKSAQAKAVA (336 aa)) form the PTS EIIC type-2 domain. Transmembrane regions (helical) follow at residues 254–274 (HMLPVVVAGGLIIALSFVFGI), 292–312 (GGSAFALMIPVLAGYIAFSIA), 322–342 (IGGMLASSTGAGFLGGIVAGF), 367–387 (ILIIPFIASLFTGLVMIYVVG), 408–428 (NAILLGIVLGAMMCFDLGGPV), 448–468 (MAAIMAAGMVPALGMGLATFI), 480–500 (AGKASFVLGLCFISEGAIPFA), 507–527 (VIPACMVGGAVTGALSMLFGA), and 537–557 (FVLLIPNAISPVLLYLVAIAV).

Its subcellular location is the cell inner membrane. The enzyme catalyses D-fructose(out) + N(pros)-phospho-L-histidyl-[protein] = D-fructose 1-phosphate(in) + L-histidyl-[protein]. Functionally, the phosphoenolpyruvate-dependent sugar phosphotransferase system (sugar PTS), a major carbohydrate active transport system, catalyzes the phosphorylation of incoming sugar substrates concomitantly with their translocation across the cell membrane. The enzyme II FruAB PTS system is involved in fructose transport. This Vibrio cholerae serotype O1 (strain ATCC 39315 / El Tor Inaba N16961) protein is PTS system fructose-specific EIIB'BC component.